Consider the following 426-residue polypeptide: Tektin-1 (426 aa).

Coiled coils occupy residues 21–84 (KNQY…LEQL), 268–307 (LKET…LDQE), and 339–383 (KEVG…ENTI). Positions 396–426 (SNPLRDGGDQGQWARACAPTPSAEDGTSHTD) are disordered.

The protein belongs to the tektin family. Microtubule inner protein component of sperm flagellar doublet microtubules. Post-translationally, ubiquitinated, leading to its degradation. Deubiquitinated by USP16, promoting its stability.

The protein localises to the cytoplasm. It localises to the cytoskeleton. The protein resides in the cilium axoneme. It is found in the flagellum axoneme. Functionally, microtubule inner protein (MIP) part of the dynein-decorated doublet microtubules (DMTs) in cilia and flagellar axoneme. Forms filamentous polymers in the walls of ciliary and flagellar microtubules. The chain is Tektin-1 (TEKT1) from Canis lupus familiaris (Dog).